A 120-amino-acid chain; its full sequence is Cell division topological specificity factor (120 aa).

The disordered stretch occupies residues 93–120 (LNSCEGENPQQDPGAAPSEGGHLSSPSP).

Belongs to the MinE family.

Functionally, prevents the cell division inhibition by proteins MinC and MinD at internal division sites while permitting inhibition at polar sites. This ensures cell division at the proper site by restricting the formation of a division septum at the midpoint of the long axis of the cell. The chain is Cell division topological specificity factor from Synechococcus sp. (strain JA-3-3Ab) (Cyanobacteria bacterium Yellowstone A-Prime).